Here is a 275-residue protein sequence, read N- to C-terminus: S-methyl-5'-thioadenosine phosphorylase (275 aa).

Phosphate-binding positions include Ser20, 62 to 63, and 95 to 96; these read RH and SA. 3 disulfide bridges follow: Cys143/Cys210, Cys205/Cys266, and Cys264/Cys267. Position 195 (Met195) interacts with substrate. Thr196 is a phosphate binding site. 219 to 221 is a binding site for substrate; it reads DYD.

This sequence belongs to the PNP/MTAP phosphorylase family. MTAP subfamily. Homohexamer. Dimer of a homotrimer.

It carries out the reaction S-methyl-5'-thioadenosine + phosphate = 5-(methylsulfanyl)-alpha-D-ribose 1-phosphate + adenine. It participates in amino-acid biosynthesis; L-methionine biosynthesis via salvage pathway; S-methyl-5-thio-alpha-D-ribose 1-phosphate from S-methyl-5'-thioadenosine (phosphorylase route): step 1/1. Catalyzes the reversible phosphorylation of S-methyl-5'-thioadenosine (MTA) to adenine and 5-methylthioribose-1-phosphate. Involved in the breakdown of MTA, a major by-product of polyamine biosynthesis. Responsible for the first step in the methionine salvage pathway after MTA has been generated from S-adenosylmethionine. Has broad substrate specificity with 6-aminopurine nucleosides as preferred substrates. The protein is S-methyl-5'-thioadenosine phosphorylase of Aeropyrum pernix (strain ATCC 700893 / DSM 11879 / JCM 9820 / NBRC 100138 / K1).